A 309-amino-acid polypeptide reads, in one-letter code: Probable ABC transporter permease protein YesP (309 aa).

6 helical membrane-spanning segments follow: residues 29-49 (FIIG…FLSF), 84-104 (FTYV…IAVI), 114-134 (IYRT…VAIM), 167-187 (ALWT…LIFL), 217-237 (LPIL…SAFM), and 275-295 (YASA…LILF). The region spanning 80–294 (LKVTFTYVLA…VIVGLITLIL (215 aa)) is the ABC transmembrane type-1 domain.

It belongs to the binding-protein-dependent transport system permease family. MalFG subfamily.

It localises to the cell membrane. Functionally, part of a binding-protein-dependent transport system. Probably responsible for the translocation of the substrate across the membrane. This is Probable ABC transporter permease protein YesP (yesP) from Bacillus subtilis (strain 168).